Consider the following 201-residue polypeptide: FMN-dependent NADH:quinone oxidoreductase (201 aa).

Residue 92–95 coordinates FMN; the sequence is MWNL.

Belongs to the azoreductase type 1 family. Homodimer. It depends on FMN as a cofactor.

The enzyme catalyses 2 a quinone + NADH + H(+) = 2 a 1,4-benzosemiquinone + NAD(+). It catalyses the reaction N,N-dimethyl-1,4-phenylenediamine + anthranilate + 2 NAD(+) = 2-(4-dimethylaminophenyl)diazenylbenzoate + 2 NADH + 2 H(+). Functionally, quinone reductase that provides resistance to thiol-specific stress caused by electrophilic quinones. In terms of biological role, also exhibits azoreductase activity. Catalyzes the reductive cleavage of the azo bond in aromatic azo compounds to the corresponding amines. The protein is FMN-dependent NADH:quinone oxidoreductase of Caldicellulosiruptor bescii (strain ATCC BAA-1888 / DSM 6725 / KCTC 15123 / Z-1320) (Anaerocellum thermophilum).